Here is a 79-residue protein sequence, read N- to C-terminus: Antimicrobial peptide ToAP2 (79 aa).

The signal sequence occupies residues methionine 1–alanine 23. The propeptide occupies serine 50 to tyrosine 79.

This sequence belongs to the non-disulfide-bridged peptide (NDBP) superfamily. Medium-length antimicrobial peptide (group 3) family. As to expression, expressed by the venom gland.

Its subcellular location is the secreted. The protein localises to the target cell membrane. Antimicrobial peptide. Shows antibacterial activity against all M.massiliense bacterial strains tested. Has antifungal activity against Candida spp. and two Cryptococcus neoformans strains with MICs values ranging from 6.25 to 200 uM. Also shows an inhibitory activity on C.albicans biofilms at high concentrations. Exhibits chemotactic activity for monocytes, neutrophils, and eosinophils. Shows low cytotoxic activity and has weak hemolytic activity on human erythrocytes. In vivo, treatment of infected mice with M.massiliense reduces the bacterial load in the liver, lung, and spleen. May act by disrupting the integrity of the bacterial cell membrane. The sequence is that of Antimicrobial peptide ToAP2 from Tityus obscurus (Amazonian scorpion).